Reading from the N-terminus, the 479-residue chain is Replication factor C large subunit (479 aa).

Residue 50–57 (GPPGSGKT) participates in ATP binding. Residues 420–468 (EKIRKERKEEEKVEVREEKPEEKVEEKREERETKKEKEKKEEKKAEKKG) are compositionally biased toward basic and acidic residues. The interval 420–479 (EKIRKERKEEEKVEVREEKPEEKVEEKREERETKKEKEKKEEKKAEKKGKQVTLFDFIKK) is disordered.

The protein belongs to the activator 1 small subunits family. RfcL subfamily. As to quaternary structure, heterohexamer composed of four small subunits (RfcS) and two large subunits (RfcL).

Part of the RFC clamp loader complex which loads the PCNA sliding clamp onto DNA. The complex possesses DNA-independent ATPase activity. The sequence is that of Replication factor C large subunit (rfcL) from Pyrococcus abyssi (strain GE5 / Orsay).